The chain runs to 541 residues: MAKSIIYNDEARRALERGMDILAEAVAVTLGPKGRNVVLEKKFGSPQIINDGITIAKEIELEDHVENTGVSLIRQAASKTNDVAGDGTTTATVLAHAIVKEGLRNVAAGANPISLKRGIDKATDFLVARIKEHAQPVGDSKAIAQVGAISAGNDEEVGQMIANAMDKVGQEGVISLEEGKSMTTELEITEGMRFDKGYISPYFVTDAERMEAVLEDPRILITDKKINLVQDLVPILEQVARQGKPLLIIAEDIEKEALATLVVNRLRGVLNVAAVKAPGFGDRRKQMLEDIATLTGGQVISEDAGLKLESATVDSLGSARRINITKDNTTIVAEGNEAAVKSRCEQIRRQIEETDSSYDKEKLQERLAKLAGGVAVIKVGAATETEMKDRKLRLEDAINATKAAVEEGIVPGGGTTLAHLAPQLEDWATGNLKDEELTGALIVARALPAPLKRIAENAGQNGAVISERVKEKEFNVGYNAASLEYVDMLAAGIVDPAKVTRSALQNAASIAGMVLTTECIVVDKPEKEKAPAGAPGGDFDY.

Residues 29–32 (TLGP), 86–90 (DGTTT), Gly413, 479–481 (NAA), and Asp495 contribute to the ATP site.

This sequence belongs to the chaperonin (HSP60) family. Forms a cylinder of 14 subunits composed of two heptameric rings stacked back-to-back. Interacts with the co-chaperonin GroES.

Its subcellular location is the cytoplasm. The enzyme catalyses ATP + H2O + a folded polypeptide = ADP + phosphate + an unfolded polypeptide.. In terms of biological role, together with its co-chaperonin GroES, plays an essential role in assisting protein folding. The GroEL-GroES system forms a nano-cage that allows encapsulation of the non-native substrate proteins and provides a physical environment optimized to promote and accelerate protein folding. The sequence is that of Chaperonin GroEL 1 from Synechocystis sp. (strain ATCC 27184 / PCC 6803 / Kazusa).